The chain runs to 216 residues: Holliday junction branch migration complex subunit RuvA (216 aa).

The interval 1-64 (MISFIKGVLI…EDAQQLYGFK (64 aa)) is domain I. The domain II stretch occupies residues 65–143 (SKVDKKVFQE…KMANEIYAQT (79 aa)). Positions 144-163 (SGTTTTSQDSQAQQAPTSVV) are flexible linker. The interval 164-216 (LANSIFNESVDALLALGYKQKDAEKMARSAMGDATTAAEVIRKALQGSIKSKR) is domain III.

The protein belongs to the RuvA family. In terms of assembly, homotetramer. Forms an RuvA(8)-RuvB(12)-Holliday junction (HJ) complex. HJ DNA is sandwiched between 2 RuvA tetramers; dsDNA enters through RuvA and exits via RuvB. An RuvB hexamer assembles on each DNA strand where it exits the tetramer. Each RuvB hexamer is contacted by two RuvA subunits (via domain III) on 2 adjacent RuvB subunits; this complex drives branch migration. In the full resolvosome a probable DNA-RuvA(4)-RuvB(12)-RuvC(2) complex forms which resolves the HJ.

It is found in the cytoplasm. In terms of biological role, the RuvA-RuvB-RuvC complex processes Holliday junction (HJ) DNA during genetic recombination and DNA repair, while the RuvA-RuvB complex plays an important role in the rescue of blocked DNA replication forks via replication fork reversal (RFR). RuvA specifically binds to HJ cruciform DNA, conferring on it an open structure. The RuvB hexamer acts as an ATP-dependent pump, pulling dsDNA into and through the RuvAB complex. HJ branch migration allows RuvC to scan DNA until it finds its consensus sequence, where it cleaves and resolves the cruciform DNA. The polypeptide is Holliday junction branch migration complex subunit RuvA (Francisella tularensis subsp. mediasiatica (strain FSC147)).